The primary structure comprises 362 residues: 3-isopropylmalate dehydrogenase (362 aa).

The substrate site is built by Arg97, Arg107, Arg135, and Asp225. Positions 225, 249, and 253 each coordinate Mg(2+). 283 to 295 (GSAPDIAHKNLAN) is an NAD(+) binding site.

The protein belongs to the isocitrate and isopropylmalate dehydrogenases family. LeuB type 1 subfamily. As to quaternary structure, homodimer. Mg(2+) is required as a cofactor. Mn(2+) serves as cofactor.

The protein resides in the cytoplasm. It catalyses the reaction (2R,3S)-3-isopropylmalate + NAD(+) = 4-methyl-2-oxopentanoate + CO2 + NADH. The protein operates within amino-acid biosynthesis; L-leucine biosynthesis; L-leucine from 3-methyl-2-oxobutanoate: step 3/4. Its function is as follows. Catalyzes the oxidation of 3-carboxy-2-hydroxy-4-methylpentanoate (3-isopropylmalate) to 3-carboxy-4-methyl-2-oxopentanoate. The product decarboxylates to 4-methyl-2 oxopentanoate. The chain is 3-isopropylmalate dehydrogenase from Prochlorococcus marinus (strain SARG / CCMP1375 / SS120).